A 201-amino-acid polypeptide reads, in one-letter code: FMN-dependent NADH:quinone oxidoreductase (201 aa).

FMN-binding positions include serine 10, 16–18 (SQS), 96–99 (MYNF), and 140–143 (SRGG).

The protein belongs to the azoreductase type 1 family. In terms of assembly, homodimer. It depends on FMN as a cofactor.

It carries out the reaction 2 a quinone + NADH + H(+) = 2 a 1,4-benzosemiquinone + NAD(+). It catalyses the reaction N,N-dimethyl-1,4-phenylenediamine + anthranilate + 2 NAD(+) = 2-(4-dimethylaminophenyl)diazenylbenzoate + 2 NADH + 2 H(+). Quinone reductase that provides resistance to thiol-specific stress caused by electrophilic quinones. Functionally, also exhibits azoreductase activity. Catalyzes the reductive cleavage of the azo bond in aromatic azo compounds to the corresponding amines. In Pectobacterium atrosepticum (strain SCRI 1043 / ATCC BAA-672) (Erwinia carotovora subsp. atroseptica), this protein is FMN-dependent NADH:quinone oxidoreductase.